The chain runs to 30 residues: uncharacterized protein (30 aa).

This is an uncharacterized protein from Dictyostelium discoideum (Social amoeba).